Here is a 902-residue protein sequence, read N- to C-terminus: Zinc finger CCCH-type antiviral protein 1 (902 aa).

Ala-2 is modified (N-acetylalanine). The segment at 2-254 (ADPEVCCFIT…ARSKSRDRFF (253 aa)) is N-terminal domain. Positions 69–76 (RARVCRRK) match the Nuclear localization signal motif. 4 consecutive C3H1-type zinc fingers follow at residues 73–86 (CRRKYCQRPCDNLH), 88–110 (CKLNLLGRCNYSQSERNLCKYSH), 150–172 (CKSYKGEGRQQICNQQPPCSRLH), and 169–193 (SRLHICDHFTRGNCRFPNCLRSHNL). Residues 221-251 (SKHMQKNPPGPRAPSSHRRNMAYRARSKSRD) are disordered. The interval 224-254 (MQKNPPGPRAPSSHRRNMAYRARSKSRDRFF) is binding to EXOSC5. Residues 235–247 (SSHRRNMAYRARS) show a composition bias toward basic residues. Ser-257, Ser-263, Ser-267, and Ser-271 each carry phosphoserine; by GSK3-beta. Residues 265–278 (SASAERSCTPSPDQ) are compositionally biased toward polar residues. Disordered stretches follow at residues 265–287 (SASAERSCTPSPDQISHRASLED) and 299–373 (YLGS…GARR). A Phosphothreonine modification is found at Thr-273. Ser-275 and Ser-284 each carry phosphoserine. A Nuclear export signal motif is present at residues 285-292 (LEDAPVDD). Phosphoserine occurs at positions 302, 327, 335, 355, 378, and 387. 2 stretches are compositionally biased toward polar residues: residues 310-336 (SGSSKATDLGGTSQAGTSQRFLENGSQ) and 344-369 (PGSTYLASNSTSAPNWKSLTSWTNDQ). Residue Thr-393 is modified to Phosphothreonine. Phosphoserine is present on residues Ser-407, Ser-469, Ser-492, and Ser-494. The segment at 445 to 481 (LNYKSTSSGHREISSPRIQDAGPASRDVQATGRIADD) is disordered. Thr-554 carries the post-translational modification Phosphothreonine. A phosphoserine mark is found at Tyr-572 and Ser-590. Positions 594-681 (SVTKPANSVF…ASKTQKDVIR (88 aa)) constitute a WWE domain. One can recognise a PARP catalytic domain in the interval 716-902 (PQEDFCFLSS…YTEDKACVIS (187 aa)).

It belongs to the ARTD/PARP family. As to quaternary structure, homodimer or homooligomer. Homooligomerization is essential for its antiviral activity. Interacts with EXOSC5. Interacts (via N-terminal domain) with DDX17 in an RNA-independent manner. Interacts with EXOSC3, EXOSC7, DCP2 and DCP1A. Interacts with PARN in an RNA-independent manner. Interacts with XRN1 in an RNA-dependent manner. Isoform 2 interacts (via zinc-fingers) with RIGI in an RNA-dependent manner. Interacts (via N-terminal domain) with DHX30 (via N-terminus) in an RNA-independent manner. In terms of processing, phosphorylation at Ser-275 is essential for sequential phosphorylation of Ser-271, Ser-267, Ser-263 and Ser-257 by GSK3-beta. Phosphorylation by GSK3-beta enhances its antiviral activity.

It localises to the cytoplasm. Its subcellular location is the nucleus. In terms of biological role, antiviral protein which inhibits the replication of viruses by recruiting the cellular RNA degradation machineries to degrade the viral mRNAs. Binds to a ZAP-responsive element (ZRE) present in the target viral mRNA, recruits cellular poly(A)-specific ribonuclease PARN to remove the poly(A) tail, and the 3'-5' exoribonuclease complex exosome to degrade the RNA body from the 3'-end. It also recruits the decapping complex DCP1-DCP2 through RNA helicase p72 (DDX17) to remove the cap structure of the viral mRNA to initiate its degradation from the 5'-end. Its target viruses belong to families which include retroviridae: human immunodeficiency virus type 1 (HIV-1), moloney and murine leukemia virus (MoMLV) and xenotropic MuLV-related virus (XMRV), filoviridae: ebola virus (EBOV) and marburg virus (MARV), togaviridae: sindbis virus (SINV) and Ross river virus (RRV). Specifically targets the multiply spliced but not unspliced or singly spliced HIV-1 mRNAs for degradation. Isoform 1 is a more potent viral inhibitor than isoform 2. Isoform 2 acts as a positive regulator of RIGI signaling resulting in activation of the downstream effector IRF3 leading to the expression of type I IFNs and IFN stimulated genes (ISGs). This Homo sapiens (Human) protein is Zinc finger CCCH-type antiviral protein 1.